The following is a 396-amino-acid chain: Elongation factor Tu (396 aa).

A tr-type G domain is found at 10–206; the sequence is KPHVNIGTIG…AVDEYIPDPV (197 aa). Positions 19–26 are G1; the sequence is GHVDHGKT. 19–26 serves as a coordination point for GTP; sequence GHVDHGKT. Thr26 is a Mg(2+) binding site. The G2 stretch occupies residues 62–66; sequence GITIN. The G3 stretch occupies residues 83–86; it reads DAPG. GTP contacts are provided by residues 83 to 87 and 138 to 141; these read DAPGH and NKSD. The interval 138 to 141 is G4; sequence NKSD. Residues 176–178 are G5; that stretch reads SGL.

Belongs to the TRAFAC class translation factor GTPase superfamily. Classic translation factor GTPase family. EF-Tu/EF-1A subfamily. In terms of assembly, monomer.

It localises to the cytoplasm. It carries out the reaction GTP + H2O = GDP + phosphate + H(+). In terms of biological role, GTP hydrolase that promotes the GTP-dependent binding of aminoacyl-tRNA to the A-site of ribosomes during protein biosynthesis. The polypeptide is Elongation factor Tu (Micrococcus luteus (strain ATCC 4698 / DSM 20030 / JCM 1464 / CCM 169 / CCUG 5858 / IAM 1056 / NBRC 3333 / NCIMB 9278 / NCTC 2665 / VKM Ac-2230) (Micrococcus lysodeikticus)).